We begin with the raw amino-acid sequence, 505 residues long: DDB1- and CUL4-associated factor 17 (505 aa).

The next 2 helical transmembrane spans lie at 186–206 (VLLYLAVFRVLPFSLVGILEI) and 222–242 (GILIVMYSSGLVRLYSFQAII).

In terms of assembly, interacts with DDB1, CUL4A and CUL4B.

It is found in the membrane. The protein localises to the nucleus. Its subcellular location is the nucleolus. Its pathway is protein modification; protein ubiquitination. May function as a substrate receptor for CUL4-DDB1 E3 ubiquitin-protein ligase complex. In Rattus norvegicus (Rat), this protein is DDB1- and CUL4-associated factor 17 (Dcaf17).